Consider the following 211-residue polypeptide: RNA chaperone ProQ (211 aa).

A disordered region spans residues 112 to 148; it reads ERRAVEKANNPKANKKRSVHHSGNKSENKKSAGKKFS. Positions 124–134 are enriched in basic residues; that stretch reads ANKKRSVHHSG.

Belongs to the ProQ family.

The protein localises to the cytoplasm. Functionally, RNA chaperone with significant RNA binding, RNA strand exchange and RNA duplexing activities. This is RNA chaperone ProQ from Histophilus somni (strain 2336) (Haemophilus somnus).